The chain runs to 310 residues: Methionyl-tRNA formyltransferase (310 aa).

109–112 (SLLP) contacts (6S)-5,6,7,8-tetrahydrofolate. The segment at 283–310 (QPQGKKAMPAADWARGARIGDGERFGDD) is disordered. Basic and acidic residues predominate over residues 300–310 (RIGDGERFGDD).

The protein belongs to the Fmt family.

The enzyme catalyses L-methionyl-tRNA(fMet) + (6R)-10-formyltetrahydrofolate = N-formyl-L-methionyl-tRNA(fMet) + (6S)-5,6,7,8-tetrahydrofolate + H(+). In terms of biological role, attaches a formyl group to the free amino group of methionyl-tRNA(fMet). The formyl group appears to play a dual role in the initiator identity of N-formylmethionyl-tRNA by promoting its recognition by IF2 and preventing the misappropriation of this tRNA by the elongation apparatus. This chain is Methionyl-tRNA formyltransferase, found in Thermobifida fusca (strain YX).